Here is a 93-residue protein sequence, read N- to C-terminus: C-C motif chemokine 3 (93 aa).

An N-terminal signal peptide occupies residues 1–24 (MKVAVAALAVLLCAMALCSQVFSA). 2 disulfides stabilise this stretch: C34-C58 and C35-C74.

It belongs to the intercrine beta (chemokine CC) family. In terms of assembly, self-associates. Also heterodimer of MIP-1-alpha(4-69) and MIP-1-beta(3-69). Interacts with CCR1.

The protein localises to the secreted. Monokine with inflammatory and chemokinetic properties. Binds to CCR1, CCR4 and CCR5. One of the major HIV-suppressive factors produced by CD8+ T-cells. Recombinant MIP-1-alpha induces a dose-dependent inhibition of different strains of HIV-1, HIV-2, and simian immunodeficiency virus (SIV). This Bos taurus (Bovine) protein is C-C motif chemokine 3 (CCL3).